The following is a 293-amino-acid chain: MPSLKDVKVKIAGVKKTKQITKAMNMVASAKLRGAQQRIERFRPYAAKFYDMLGDLASKADSSVHPLLEVREEIKTCGIVLATSDRGLCGSFNSNLITTALKLAAKKAAEGKKVKFYCVGKKGRDAARKTDHEVAMALADQMGSFDFQLANRIGLDVINAYLARELDEVIMVYGEFVSMAKQLPIALPILPIAPKEEEAAPAAPASNKEYIYEPAVEGLLAELLPRFIKVQLYRGLLDTSASEHAARMAAMDNATRSCDDMIGSLTLLFNKTRQASITRDLMDIVGGAEALKG.

Belongs to the ATPase gamma chain family. F-type ATPases have 2 components, CF(1) - the catalytic core - and CF(0) - the membrane proton channel. CF(1) has five subunits: alpha(3), beta(3), gamma(1), delta(1), epsilon(1). CF(0) has three main subunits: a, b and c.

The protein localises to the cell inner membrane. In terms of biological role, produces ATP from ADP in the presence of a proton gradient across the membrane. The gamma chain is believed to be important in regulating ATPase activity and the flow of protons through the CF(0) complex. This Nitratidesulfovibrio vulgaris (strain DSM 19637 / Miyazaki F) (Desulfovibrio vulgaris) protein is ATP synthase gamma chain.